A 781-amino-acid polypeptide reads, in one-letter code: Pyrin (781 aa).

A Pyrin domain is found at 1-92 (MAKTPSDHLL…AEELHRAAIQ (92 aa)). The span at 93–111 (EYSTQENGTDDSAASSSLG) shows a compositional bias: polar residues. Positions 93 to 226 (EYSTQENGTD…AGGAPGQKEC (134 aa)) are disordered. The segment covering 113–126 (NKPRSLKTPDHPEG) has biased composition (basic and acidic residues). The span at 153–163 (LSRKPLSKRRE) shows a compositional bias: basic residues. The residue at position 242 (S242) is a Phosphoserine. The segment at 266–280 (KTAANLDSATEPRAR) is interaction with RELA. 2 disordered regions span residues 270-322 (NLDS…EGDP) and 336-373 (EAVS…QPLP). The B box-type zinc-finger motif lies at 370-412 (QPLPQCKRHLKQVQLLFCEDHDEPICLICSLSQEHQGHRVRPI). The stretch at 413–442 (EEVALEHKKKIQKQLEHLKKLRKSGEEQRS) forms a coiled coil. A Nuclear localization signal motif is present at residues 420–437 (KKKIQKQLEHLKKLRKSG). Positions 420-582 (KKKIQKQLEH…YFSETLRSEM (163 aa)) are required for homotrimerization and induction of pyroptosomes. Residues 580-775 (SEMEMFNVPE…NTAPLTICPV (196 aa)) enclose the B30.2/SPRY domain.

Homotrimer. Interacts (via the B box-type zinc finger) with PSTPIP1. Interacts (via the B30.2/SPRY domain) with several components of the inflammasome complex, including CASP1 p20 and p10 subunits, CASP5, PYCARD, NLRP1, NLRP2 and NLRP3, as well as with unprocessed IL1B; this interaction may lead to autophagic degradation of these proteins. Component of the AIM2 PANoptosome complex, a multiprotein complex that drives inflammatory cell death (PANoptosis). Interacts with NFKBIA and RELA. Interacts weakly with VASP and ACTR3. Interacts with active ULK1 (phosphorylated on 'Ser-317') and BECN1 simultaneously. Also interacts with ATG16L1 (via WD repeats), and with ATG8 family members, including GABARAP, GABARAPL1 and, to a lesser extent, GABARAPL2, MAP1LC3A/LC3A and MAP1LC3C/LC3C. Interacts with TRIM21. Interacts with YWHAB, YWHAE, YWHAG, YWHAH, YWHAQ and YWHAZ; the interaction is required for the down-regulation of pyrin pro-inflammatory activity. Post-translationally, cleaved by CASP1. The N-terminal cleavage product localizes to the nucleus as a filamentous network and to the cytoplasm, interacts more strongly with RELA and NFKBIA than the full-length protein, enhances the nuclear localization of RELA and induces NFKBIA proteolysis. The C-terminal cleavage product localizes to the cytoplasm. In terms of processing, phosphorylation at Ser-242 is required for the interaction with 14-3-3 proteins and down-regulation of pyrin pro-inflammatory activity. Degraded along with the delivery of its substrates to autolysosomal compartments (at protein level). Expressed in peripheral blood leukocytes, particularly in mature granulocytes and to a lesser extent in monocytes but not in lymphocytes. Detected in spleen, lung and muscle, probably as a result of leukocyte infiltration in these tissues. Not expressed in thymus, prostate, testis, ovary, small intestine, colon, heart, brain, placenta, liver, kidney, pancreas. Expression detected in several myeloid leukemic, colon cancer, and prostate cancer cell lines.

Its subcellular location is the cytoplasm. The protein resides in the cytoskeleton. It is found in the cell projection. It localises to the ruffle. The protein localises to the lamellipodium. Its subcellular location is the nucleus. The protein resides in the cytoplasmic vesicle. It is found in the autophagosome. Involved in the regulation of innate immunity and the inflammatory response in response to IFNG/IFN-gamma. Organizes autophagic machinery by serving as a platform for the assembly of ULK1, Beclin 1/BECN1, ATG16L1, and ATG8 family members and recognizes specific autophagy targets, thus coordinating target recognition with assembly of the autophagic apparatus and initiation of autophagy. Acts as an autophagy receptor for the degradation of several inflammasome components, including CASP1, NLRP1 and NLRP3, hence preventing excessive IL1B- and IL18-mediated inflammation. However, it can also have a positive effect in the inflammatory pathway, acting as an innate immune sensor that triggers PYCARD/ASC specks formation, caspase-1 activation, and IL1B and IL18 production. Together with AIM2, also acts as a mediator of pyroptosis, necroptosis and apoptosis (PANoptosis), an integral part of host defense against pathogens, in response to bacterial infection. It is required for PSTPIP1-induced PYCARD/ASC oligomerization and inflammasome formation. Recruits PSTPIP1 to inflammasomes, and is required for PSTPIP1 oligomerization. The sequence is that of Pyrin from Homo sapiens (Human).